Here is a 421-residue protein sequence, read N- to C-terminus: ATP-dependent RNA helicase RhlB (421 aa).

Positions 9 to 37 match the Q motif motif; sequence QKFSDFALHPQVVEALEKKRFYNCTPIQA. The Helicase ATP-binding domain occupies 40 to 219; it reads LPLTLAGRDV…FEQMNNAEYV (180 aa). 53 to 60 lines the ATP pocket; sequence AQTGTGKT. The short motif at 165–168 is the DEAD box element; sequence DEAD. One can recognise a Helicase C-terminal domain in the interval 245–390; sequence RLLQTLIEEE…VSKYNPEALM (146 aa). The interval 396 to 421 is disordered; sequence PLRLTRSRPGNGPRRAGAPRNRRRSG. Over residues 402–414 the composition is skewed to low complexity; that stretch reads SRPGNGPRRAGAP.

Belongs to the DEAD box helicase family. RhlB subfamily. As to quaternary structure, component of the RNA degradosome, which is a multiprotein complex involved in RNA processing and mRNA degradation.

Its subcellular location is the cytoplasm. The enzyme catalyses ATP + H2O = ADP + phosphate + H(+). DEAD-box RNA helicase involved in RNA degradation. Has RNA-dependent ATPase activity and unwinds double-stranded RNA. The protein is ATP-dependent RNA helicase RhlB of Salmonella dublin (strain CT_02021853).